The sequence spans 345 residues: RNA polymerase II holoenzyme cyclin-like subunit (345 aa).

The region spanning 53–144 (QQINRLGKRM…IGECEFYLIS (92 aa)) is the Cyclin N-terminal domain. Residues 256-285 (GLTPQSSSGLQAMLPPQSPAGEGPAEGNKN) are disordered.

This sequence belongs to the cyclin family. Cyclin C subfamily. As to quaternary structure, component of the srb8-11 complex, a regulatory module of the Mediator complex.

The protein localises to the nucleus. Functionally, component of the srb8-11 complex. The srb8-11 complex is a regulatory module of the Mediator complex which is itself involved in regulation of basal and activated RNA polymerase II-dependent transcription. The srb8-11 complex may be involved in the transcriptional repression of a subset of genes regulated by Mediator. It may inhibit the association of the Mediator complex with RNA polymerase II to form the holoenzyme complex. The srb8-11 complex phosphorylates the C-terminal domain (CTD) of the largest subunit of RNA polymerase II. The chain is RNA polymerase II holoenzyme cyclin-like subunit (ssn8) from Neurospora crassa (strain ATCC 24698 / 74-OR23-1A / CBS 708.71 / DSM 1257 / FGSC 987).